Consider the following 477-residue polypeptide: Solute carrier family 2, facilitated glucose transporter member 8 (477 aa).

Topologically, residues 1 to 25 (MSPEDPQETQPLLRPPEARTPRGRR) are cytoplasmic. The short motif at 12–13 (LL) is the Dileucine internalization motif element. Residues 26–46 (VFLASFAAALGPLSFGFALGY) form a helical membrane-spanning segment. The Extracellular segment spans residues 47 to 70 (SSPAIPSLRRTAPPALRLGDNAAS). Residues 71-91 (WFGAVVTLGAAAGGILGGWLL) form a helical membrane-spanning segment. Topologically, residues 92 to 96 (DRAGR) are cytoplasmic. A helical transmembrane segment spans residues 97-117 (KLSLLLCTVPFVTGFAVITAA). At 118 to 127 (RDVWMLLGGR) the chain is on the extracellular side. The chain crosses the membrane as a helical span at residues 128–148 (LLTGLACGVASLVAPVYISEI). The Cytoplasmic segment spans residues 149-156 (AYPAVRGL). A helical membrane pass occupies residues 157–177 (LGSCVQLMVVTGILLAYVAGW). Gln162 serves as a coordination point for D-glucose. Residues 178–182 (VLEWR) are Extracellular-facing. A helical membrane pass occupies residues 183 to 203 (WLAVLGCVPPTLMLLLMCYMP). Residues 204-257 (ETPRFLLTQHQYQEAMAALRFLWGSEEGWEEPPVGAEHQGFQLALLRRPGIYKP) lie on the Cytoplasmic side of the membrane. A helical membrane pass occupies residues 258 to 278 (LIIGISLMVFQQLSGVNAIMF). D-glucose contacts are provided by residues 268 to 269 (QQ) and Asn274. At 279–293 (YANSIFEEAKFKDSS) the chain is on the extracellular side. A helical transmembrane segment spans residues 294–314 (LASVTVGIIQVLFTAVAALIM). The Cytoplasmic segment spans residues 315 to 320 (DRAGRR). The chain crosses the membrane as a helical span at residues 321-341 (LLLALSGVIMVFSMSAFGTYF). The Extracellular segment spans residues 342–367 (KLTQSLPSNSSHVGLVPIAAEPVDVQ). N-linked (GlcNAc...) asparagine glycosylation occurs at Asn350. The chain crosses the membrane as a helical span at residues 368 to 388 (VGLAWLAVGSMCLFIAGFAVG). The Cytoplasmic segment spans residues 389-404 (WGPIPWLLMSEIFPLH). Trp394 serves as a coordination point for D-glucose. The chain crosses the membrane as a helical span at residues 405-425 (VKGVATGICVLTNWFMAFLVT). At 426–438 (KEFSSVMEMLRPY) the chain is on the extracellular side. The chain crosses the membrane as a helical span at residues 439–459 (GAFWLTAAFCALSVLFTLTVV). Residues 460-477 (PETKGRTLEQVTAHFEGR) lie on the Cytoplasmic side of the membrane.

Belongs to the major facilitator superfamily. Sugar transporter (TC 2.A.1.1) family. Glucose transporter subfamily. In terms of assembly, interacts with AP2B1. Also able to mediate the transport of dehydroascorbate. In terms of tissue distribution, highest level of expression in placenta and testis. Highly expressed in adult and pubertal testis, but not prepubertal testis. Lower levels of expression in brain, liver, heart, kidney, fat and skeletal muscle.

It is found in the cell membrane. Its subcellular location is the cytoplasmic vesicle membrane. It carries out the reaction D-glucose(out) = D-glucose(in). The catalysed reaction is D-fructose(out) = D-fructose(in). The enzyme catalyses L-dehydroascorbate(out) = L-dehydroascorbate(in). It catalyses the reaction alpha,alpha-trehalose(in) = alpha,alpha-trehalose(out). Its activity is regulated as follows. Inhibited by cytochalasin B. Functionally, insulin-regulated facilitative hexose transporter that mediates the transport of glucose and fructose. Facilitates hepatic influx of dietary trehalose, which in turn inhibits glucose and fructose influx triggering a starvation signal and hepatic autophagy through activation of AMPK and ULK1. Also able to mediate the transport of dehydroascorbate. In Mus musculus (Mouse), this protein is Solute carrier family 2, facilitated glucose transporter member 8.